The chain runs to 340 residues: Spike protein P5 (340 aa).

Residues 2–122 (ANQQIGGSTV…NFPIALGVWP (121 aa)) are domain-1. The Collagen-like domain occupies 123-141 (SGIKGDKGDPGAPGPAGGT). The domain-2 stretch occupies residues 142 to 340 (VVVEDSGASF…IINITAAKIN (199 aa)).

Homotrimer.

Its subcellular location is the virion. In association with P31 and P2, forms the spike complexes located at the 5-fold vertices of the capsid. Essential for viral infectivity. This Enterobacteria phage PRD1 (Bacteriophage PRD1) protein is Spike protein P5 (V).